We begin with the raw amino-acid sequence, 561 residues long: DNA ligase B (561 aa).

Lysine 125 acts as the N6-AMP-lysine intermediate in catalysis.

Belongs to the NAD-dependent DNA ligase family. LigB subfamily.

It catalyses the reaction NAD(+) + (deoxyribonucleotide)n-3'-hydroxyl + 5'-phospho-(deoxyribonucleotide)m = (deoxyribonucleotide)n+m + AMP + beta-nicotinamide D-nucleotide.. Functionally, catalyzes the formation of phosphodiester linkages between 5'-phosphoryl and 3'-hydroxyl groups in double-stranded DNA using NAD as a coenzyme and as the energy source for the reaction. This is DNA ligase B from Salmonella dublin (strain CT_02021853).